We begin with the raw amino-acid sequence, 133 residues long: Small ribosomal subunit protein uS9 (133 aa).

Belongs to the universal ribosomal protein uS9 family.

In Ureaplasma urealyticum serovar 10 (strain ATCC 33699 / Western), this protein is Small ribosomal subunit protein uS9.